Reading from the N-terminus, the 475-residue chain is MSPKTETKASVGFQAGVKDYRLTYYTPEYQTKDTDILAAFRVTPQPGVPPEEAGAAVAAESSTGTWTTVWTDGLTSLDRYKGRCYDLEPVPGEDNLFIAYVAYPLDLFEVGSVTNMFTSIVGNVFGYKALRALRLEDLRIPPAYIKTFQGPPHGIQVERDKLNKYGRPLLGCTIKPKLGLSAKNYGRAVYECLRGGLDFTKDDENVNSQPFMRWRDRFVFCAEALNKAQAETGEIKGHYLNATAGTCEEMIKRAVFARELGVPIVMHDYLTGGFTANTSLAHYCRDNGLLLHIHRAMHAVIDRQKNHGMHFRVLAKALRLSGGDHIHGGTVVGKLEGEREITLGFVDLLRDDFVEKDRSRGIYFTQDWVSMPGVLPVASGGIHVWHMPALTEIFGDDAVLQFGGGTLGHPWGNAPGAVANRVALEACVQARNEGRDLVREGNEVIREASKWSAELAAACEVWKEIKFEFAPVDTV.

A propeptide spanning residues 1-2 (MS) is cleaved from the precursor. Proline 3 bears the N-acetylproline mark. Substrate contacts are provided by asparagine 123 and threonine 173. Lysine 175 (proton acceptor) is an active-site residue. Lysine 177 lines the substrate pocket. 3 residues coordinate Mg(2+): lysine 201, aspartate 203, and glutamate 204. N6-carboxylysine is present on lysine 201. The active-site Proton acceptor is histidine 294. 3 residues coordinate substrate: arginine 295, histidine 327, and serine 379.

This sequence belongs to the RuBisCO large chain family. Type I subfamily. In terms of assembly, heterohexadecamer of 8 large chains and 8 small chains; disulfide-linked. The disulfide link is formed within the large subunit homodimers. Mg(2+) serves as cofactor. Post-translationally, the disulfide bond which can form in the large chain dimeric partners within the hexadecamer appears to be associated with oxidative stress and protein turnover.

It is found in the plastid. It localises to the chloroplast. The catalysed reaction is 2 (2R)-3-phosphoglycerate + 2 H(+) = D-ribulose 1,5-bisphosphate + CO2 + H2O. It carries out the reaction D-ribulose 1,5-bisphosphate + O2 = 2-phosphoglycolate + (2R)-3-phosphoglycerate + 2 H(+). RuBisCO catalyzes two reactions: the carboxylation of D-ribulose 1,5-bisphosphate, the primary event in carbon dioxide fixation, as well as the oxidative fragmentation of the pentose substrate in the photorespiration process. Both reactions occur simultaneously and in competition at the same active site. This Gnetum parvifolium (Small-leaved jointfir) protein is Ribulose bisphosphate carboxylase large chain.